The chain runs to 421 residues: Acetate kinase (421 aa).

A Mg(2+)-binding site is contributed by asparagine 7. Residue lysine 14 participates in ATP binding. Arginine 91 contacts substrate. Aspartate 148 serves as the catalytic Proton donor/acceptor. Residues 208 to 212 (HIGNG) and 283 to 285 (DRR) each bind ATP. Mg(2+) is bound at residue glutamate 387.

It belongs to the acetokinase family. Homodimer. Mg(2+) serves as cofactor. It depends on Mn(2+) as a cofactor.

Its subcellular location is the cytoplasm. It carries out the reaction acetate + ATP = acetyl phosphate + ADP. Its pathway is metabolic intermediate biosynthesis; acetyl-CoA biosynthesis; acetyl-CoA from acetate: step 1/2. Its function is as follows. Catalyzes the formation of acetyl phosphate from acetate and ATP. Can also catalyze the reverse reaction. The protein is Acetate kinase of Trichlorobacter lovleyi (strain ATCC BAA-1151 / DSM 17278 / SZ) (Geobacter lovleyi).